We begin with the raw amino-acid sequence, 500 residues long: Probable cytosol aminopeptidase (500 aa).

Residues K264 and D269 each coordinate Mn(2+). Residue K276 is part of the active site. The Mn(2+) site is built by D287, D346, and E348. R350 is an active-site residue.

Belongs to the peptidase M17 family. The cofactor is Mn(2+).

The protein resides in the cytoplasm. It catalyses the reaction Release of an N-terminal amino acid, Xaa-|-Yaa-, in which Xaa is preferably Leu, but may be other amino acids including Pro although not Arg or Lys, and Yaa may be Pro. Amino acid amides and methyl esters are also readily hydrolyzed, but rates on arylamides are exceedingly low.. It carries out the reaction Release of an N-terminal amino acid, preferentially leucine, but not glutamic or aspartic acids.. Its function is as follows. Presumably involved in the processing and regular turnover of intracellular proteins. Catalyzes the removal of unsubstituted N-terminal amino acids from various peptides. In Chlamydia felis (strain Fe/C-56) (Chlamydophila felis), this protein is Probable cytosol aminopeptidase.